Reading from the N-terminus, the 213-residue chain is Golgi to ER traffic protein 1 (213 aa).

The Lumenal portion of the chain corresponds to M1–W4. A helical transmembrane segment spans residues L5 to I25. The Cytoplasmic segment spans residues Q26 to K98. A coiled-coil region spans residues A55–L99. Residues L99 to Y119 traverse the membrane as a helical segment. The Lumenal portion of the chain corresponds to D120–T158. Residues V159 to L175 form a helical membrane-spanning segment. Residues G176–D213 lie on the Cytoplasmic side of the membrane. A disordered region spans residues T193 to D213.

This sequence belongs to the WRB/GET1 family. In terms of assembly, component of the Golgi to ER traffic (GET) complex, which is composed of GET1, GET2 and GET3. Within the complex, GET1 and GET2 form a heterotetramer which is stabilized by phosphatidylinositol binding and which binds to the GET3 homodimer.

It is found in the endoplasmic reticulum membrane. The protein resides in the golgi apparatus membrane. Its function is as follows. Required for the post-translational delivery of tail-anchored (TA) proteins to the endoplasmic reticulum. Together with GET2, acts as a membrane receptor for soluble GET3, which recognizes and selectively binds the transmembrane domain of TA proteins in the cytosol. The GET complex cooperates with the HDEL receptor ERD2 to mediate the ATP-dependent retrieval of resident ER proteins that contain a C-terminal H-D-E-L retention signal from the Golgi to the ER. The protein is Golgi to ER traffic protein 1 of Kluyveromyces lactis (strain ATCC 8585 / CBS 2359 / DSM 70799 / NBRC 1267 / NRRL Y-1140 / WM37) (Yeast).